We begin with the raw amino-acid sequence, 33 residues long: MNSNLTALRTVQASRPFLSNKKRMALFVQEKLA.

This is an uncharacterized protein from Saccharomyces cerevisiae (strain ATCC 204508 / S288c) (Baker's yeast).